The chain runs to 673 residues: Mechanosensitive ion channel protein 2, chloroplastic (673 aa).

The transit peptide at 1–75 (MALYGTLQLS…SVPCRTTAFR (75 aa)) directs the protein to the chloroplast. The next 5 helical transmembrane spans lie at 107–127 (FPFV…LWGL), 152–172 (YHVM…LFIC), 193–213 (LNFV…SSLI), 240–260 (ALYS…LGFS), and 264–284 (WLTA…EILT). Positions 492-673 (KINGEDKSKS…QPNSGASTEP (182 aa)) are disordered. Composition is skewed to basic and acidic residues over residues 510–525 (AEQE…KETS), 564–576 (TPKD…TEKP), and 617–642 (GSKR…ELTG). Phosphoserine is present on S571. A compositionally biased stretch (polar residues) spans 661 to 673 (SQSQPNSGASTEP).

It belongs to the MscS (TC 1.A.23) family. As to expression, widely expressed.

Its subcellular location is the plastid. It localises to the chloroplast membrane. Its function is as follows. Mechanosensitive channel that opens in response to stretch forces in the membrane lipid bilayer. Controls plastid size, shape, and perhaps division during normal plant development by altering ion flux in response to changes in membrane tension. Acts as a component of the chloroplast division machinery. The protein is Mechanosensitive ion channel protein 2, chloroplastic (MSL2) of Arabidopsis thaliana (Mouse-ear cress).